We begin with the raw amino-acid sequence, 94 residues long: Small ribosomal subunit protein bS18 (94 aa).

This sequence belongs to the bacterial ribosomal protein bS18 family. Part of the 30S ribosomal subunit. Forms a tight heterodimer with protein bS6.

Binds as a heterodimer with protein bS6 to the central domain of the 16S rRNA, where it helps stabilize the platform of the 30S subunit. The polypeptide is Small ribosomal subunit protein bS18 (Albidiferax ferrireducens (strain ATCC BAA-621 / DSM 15236 / T118) (Rhodoferax ferrireducens)).